The primary structure comprises 393 residues: Probable acetyl-CoA acyltransferase (393 aa).

Catalysis depends on C88, which acts as the Acyl-thioester intermediate. Residues H349 and C378 each act as proton acceptor in the active site.

This sequence belongs to the thiolase-like superfamily. Thiolase family.

Its subcellular location is the cytoplasm. The enzyme catalyses 2 acetyl-CoA = acetoacetyl-CoA + CoA. This is Probable acetyl-CoA acyltransferase from Staphylococcus aureus (strain NCTC 8325 / PS 47).